Consider the following 489-residue polypeptide: Tandem C2 domains nuclear protein (489 aa).

Phosphoserine is present on residues Ser82, Ser155, Ser167, Ser173, and Ser210. Residues 189-214 (DSFSSVPSSSSSRKNSQGSNRSLDTI) form a disordered region. Low complexity predominate over residues 191-210 (FSSVPSSSSSRKNSQGSNRS). 2 positions are modified to phosphothreonine: Thr213 and Thr215. Phosphoserine is present on Ser217. C2 domains lie at 222–341 (DLGR…SLEI) and 343–470 (APSK…NQWK). A Nuclear localization signal motif is present at residues 446-448 (RRK).

The protein localises to the nucleus. This Mus musculus (Mouse) protein is Tandem C2 domains nuclear protein (Tc2n).